We begin with the raw amino-acid sequence, 115 residues long: Nucleoid-associated protein Rpic_1036 (115 aa).

Belongs to the YbaB/EbfC family. As to quaternary structure, homodimer.

The protein localises to the cytoplasm. The protein resides in the nucleoid. Binds to DNA and alters its conformation. May be involved in regulation of gene expression, nucleoid organization and DNA protection. This is Nucleoid-associated protein Rpic_1036 from Ralstonia pickettii (strain 12J).